Consider the following 764-residue polypeptide: Complement factor B (764 aa).

A signal peptide spans 1–25 (MGSNLSPQLCLMPFILGLLSGGVTT). 3 consecutive Sushi domains span residues 35–100 (GSCS…ECRA), 101–160 (IHCP…ICDN), and 163–220 (GYCS…SCQD). 6 disulfides stabilise this stretch: Cys-37-Cys-76, Cys-62-Cys-98, Cys-103-Cys-145, Cys-131-Cys-158, Cys-165-Cys-205, and Cys-191-Cys-218. Asn-122 and Asn-142 each carry an N-linked (GlcNAc...) asparagine glycan. The region spanning 270–469 (NIYLVLDGSD…NLEDVFYQMI (200 aa)) is the VWFA domain. Residues Ser-278 and Ser-280 each contribute to the Mg(2+) site. Residue Asn-285 is glycosylated (N-linked (GlcNAc...) asparagine). Residue Thr-353 participates in Mg(2+) binding. Asn-378 carries an N-linked (GlcNAc...) asparagine glycan. The 281-residue stretch at 477–757 (LCGMVWEHRK…VLPWLKEKLQ (281 aa)) folds into the Peptidase S1 domain. Intrachain disulfides connect Cys-478-Cys-596, Cys-511-Cys-527, Cys-599-Cys-615, Cys-656-Cys-682, and Cys-695-Cys-725. Catalysis depends on charge relay system residues His-526 and Asp-576. The Charge relay system role is filled by Ser-699.

The protein belongs to the peptidase S1 family. In terms of assembly, monomer. Interacts with complement C3b; this interaction is dependent on the presence of Mg(2+). As to quaternary structure, catalytic component of the C3 convertase of the alternative complement pathway, also named C3bBb, composed of complement factor B Bb and complement C3b. Catalytic component of the C5 convertase of the alternative complement pathway, also named C3bBb3b, composed of complement factor B Bb and additional molecules of complement C3b. Interacts to CFP; this interaction contributes to the stabilization of the active C3-convertase enzyme complex. Requires Mg(2+) as cofactor. It depends on Mn(2+) as a cofactor. Post-translationally, cleaved by CFD following activation of the alternative complement system, generating Ba and Bb chains. Cleavage and activation takes place when CFB is already associated with complement C3b.

It is found in the secreted. Its subcellular location is the cell surface. It catalyses the reaction Cleavage of Arg-|-Ser bond in complement component C3 alpha-chain to yield C3a and C3b, and Arg-|-Xaa bond in complement component C5 alpha-chain to yield C5a and C5b.. Functionally, precursor of the catalytic component of the C3 and C5 convertase complexes of the alternative pathway of the complement system, a cascade of proteins that leads to phagocytosis and breakdown of pathogens and signaling that strengthens the adaptive immune system. The alternative complement pathway acts as an amplification loop that enhances other complement pathways (classical, lectin and GZMK) by promoting formation of additional C3 and C5 convertases. CFB is cleaved and activated by CFD to generate Ba and Bb chains; Bb chain constituting the catalytic component of the C3 and C5 convertases. Serine protease component of the complement C3 and C5 convertase complexes of the alternative complement pathway. Following cleavage and activation by factor D (CFD), forms the C3 convertase together with complement C3b. As part of the C3 convertase, cleaves and activates C3 into C3a anaphylatoxin and C3b opsonin, the next components of the complement pathways. When an additional complement C3b molecule binds to the C3 convertase, forms the C5 convertase, which cleaves and activates C5 into C5a anaphylatoxin and C5b component of the membrane attack complex. Its function is as follows. Involved in proliferation and differentiation of preactivated B-lymphocytes, rapid spreading of peripheral blood monocytes, stimulation of lymphocyte blastogenesis and lysis of erythrocytes. This chain is Complement factor B (CFB), found in Gorilla gorilla gorilla (Western lowland gorilla).